The sequence spans 334 residues: MATATSHQSVVSFASLRSSPSSTISQCGFKIDSSLSFTSKKTNFCKIKAMASSVSYDNTLLSPSKTIPDNSQKKSNEAALILIRHGESLWNEKNLFTGCVDVPLTEKGVEEAIEAGKRISNIPVDVIFTSSLIRAQMTAMLAMIQHRRKKVPIILHDESEQAKTWSQVFSDETKNQSIPVIPAWQLNERMYGELQGLNKQETAERYGKEQVHEWRRSYDIPPPKGESLEMCAERAVAYFQDNIEPKLAAGKNVMIAAHGNSLRSIIMYLDKLTCQEVISLELSTGIPLLYIFKEGKFMKRGSPVGPTEAGVYAYTKRLAQYRQKLEDDSEVLCA.

Residues 1 to 48 (MATATSHQSVVSFASLRSSPSSTISQCGFKIDSSLSFTSKKTNFCKIK) constitute a chloroplast transit peptide. Residues 84 to 91 (RHGESLWN), 97 to 98 (TG), Arg-134, 188 to 191 (ERMY), Lys-199, 215 to 216 (RR), and 259 to 260 (GN) each bind substrate. The Tele-phosphohistidine intermediate role is filled by His-85. Glu-188 acts as the Proton donor/acceptor in catalysis.

It belongs to the phosphoglycerate mutase family. BPG-dependent PGAM subfamily.

The protein resides in the plastid. The protein localises to the chloroplast. The catalysed reaction is (2R)-2-phosphoglycerate = (2R)-3-phosphoglycerate. Its pathway is carbohydrate degradation; glycolysis; pyruvate from D-glyceraldehyde 3-phosphate: step 3/5. Its function is as follows. Catalyzes the interconversion of 2-phosphoglycerate and 3-phosphoglycerate. This Arabidopsis thaliana (Mouse-ear cress) protein is 2,3-bisphosphoglycerate-dependent phosphoglycerate mutase 1.